A 444-amino-acid chain; its full sequence is Phosphoglucosamine mutase (444 aa).

The Phosphoserine intermediate role is filled by S102. S102, D241, D243, and D245 together coordinate Mg(2+). S102 is subject to Phosphoserine.

Belongs to the phosphohexose mutase family. Requires Mg(2+) as cofactor. Activated by phosphorylation.

The catalysed reaction is alpha-D-glucosamine 1-phosphate = D-glucosamine 6-phosphate. Catalyzes the conversion of glucosamine-6-phosphate to glucosamine-1-phosphate. This chain is Phosphoglucosamine mutase, found in Haemophilus ducreyi (strain 35000HP / ATCC 700724).